Reading from the N-terminus, the 164-residue chain is UPF0114 protein KPN78578_33570 (164 aa).

Helical transmembrane passes span 15–35 (LLAP…IKFF), 53–73 (MILT…LVMV), 109–126 (VAAS…RVFM), and 136–156 (LMWY…MGYL).

It belongs to the UPF0114 family.

Its subcellular location is the cell membrane. This chain is UPF0114 protein KPN78578_33570, found in Klebsiella pneumoniae subsp. pneumoniae (strain ATCC 700721 / MGH 78578).